Reading from the N-terminus, the 408-residue chain is Histidine--tRNA ligase (408 aa).

This sequence belongs to the class-II aminoacyl-tRNA synthetase family. In terms of assembly, homodimer.

The protein resides in the cytoplasm. The catalysed reaction is tRNA(His) + L-histidine + ATP = L-histidyl-tRNA(His) + AMP + diphosphate + H(+). In Campylobacter jejuni subsp. doylei (strain ATCC BAA-1458 / RM4099 / 269.97), this protein is Histidine--tRNA ligase.